Consider the following 210-residue polypeptide: LexA repressor (210 aa).

Positions 31–51 (RVEISKELGFRSPNAAEEHLK) form a DNA-binding region, H-T-H motif. Active-site for autocatalytic cleavage activity residues include S126 and K163.

It belongs to the peptidase S24 family. As to quaternary structure, homodimer.

It catalyses the reaction Hydrolysis of Ala-|-Gly bond in repressor LexA.. Its function is as follows. Represses a number of genes involved in the response to DNA damage (SOS response), including recA and lexA. In the presence of single-stranded DNA, RecA interacts with LexA causing an autocatalytic cleavage which disrupts the DNA-binding part of LexA, leading to derepression of the SOS regulon and eventually DNA repair. This chain is LexA repressor, found in Histophilus somni (strain 129Pt) (Haemophilus somnus).